A 435-amino-acid polypeptide reads, in one-letter code: Methionine aminopeptidase 2-2 (435 aa).

The interval 1-92 (MAAQTTEKLQ…VPVSNLFPNN (92 aa)) is disordered. Positions 24 to 33 (DAPAAGQAEA) are enriched in low complexity. The segment covering 34 to 45 (GEAEEDSDDEKD) has biased composition (acidic residues). Basic residues predominate over residues 59–73 (AKKKKRKSKKKKKGG). Substrate is bound at residue His197. Residues Asp217, Asp228, and His297 each coordinate a divalent metal cation. A substrate-binding site is contributed by His305. Glu330 and Glu425 together coordinate a divalent metal cation.

Belongs to the peptidase M24A family. Methionine aminopeptidase eukaryotic type 2 subfamily. The cofactor is Co(2+). Requires Zn(2+) as cofactor. Mn(2+) serves as cofactor. Fe(2+) is required as a cofactor.

Its subcellular location is the cytoplasm. The enzyme catalyses Release of N-terminal amino acids, preferentially methionine, from peptides and arylamides.. In terms of biological role, cotranslationally removes the N-terminal methionine from nascent proteins. The N-terminal methionine is often cleaved when the second residue in the primary sequence is small and uncharged (Met-Ala-, Cys, Gly, Pro, Ser, Thr, or Val). The protein is Methionine aminopeptidase 2-2 of Aspergillus clavatus (strain ATCC 1007 / CBS 513.65 / DSM 816 / NCTC 3887 / NRRL 1 / QM 1276 / 107).